Here is a 142-residue protein sequence, read N- to C-terminus: Large ribosomal subunit protein bL17 (142 aa).

Belongs to the bacterial ribosomal protein bL17 family. As to quaternary structure, part of the 50S ribosomal subunit. Contacts protein L32.

This chain is Large ribosomal subunit protein bL17, found in Chlamydia muridarum (strain MoPn / Nigg).